Consider the following 223-residue polypeptide: Interleukin-12 subunit alpha (223 aa).

Positions 1-23 are cleaved as a signal peptide; that stretch reads MCPSARSLLLLASLVLLEHLGSA. 4 N-linked (GlcNAc...) asparagine glycosylation sites follow: N41, N79, N121, and N176. Disulfide bonds link C66–C200 and C87–C125.

This sequence belongs to the IL-6 superfamily. Heterodimer with IL12B; disulfide-linked. This heterodimer is known as interleukin IL-12. Heterodimer with EBI3/IL27B; not disulfide-linked. This heterodimer is known as interleukin IL-35. Interacts with NBR1; this interaction promotes IL-12 secretion.

It localises to the secreted. In terms of biological role, heterodimerizes with IL12B to form the IL-12 cytokine or with EBI3/IL27B to form the IL-35 cytokine. IL-12 is primarily produced by professional antigen-presenting cells (APCs) such as B-cells and dendritic cells (DCs) as well as macrophages and granulocytes and regulates T-cell and natural killer-cell responses, induces the production of interferon-gamma (IFN-gamma), favors the differentiation of T-helper 1 (Th1) cells and is an important link between innate resistance and adaptive immunity. Mechanistically, exerts its biological effects through a receptor composed of IL12R1 and IL12R2 subunits. Binding to the receptor results in the rapid tyrosine phosphorylation of a number of cellular substrates including the JAK family kinases TYK2 and JAK2. In turn, recruited STAT4 gets phosphorylated and translocates to the nucleus where it regulates cytokine/growth factor responsive genes. As part of IL-35, plays essential roles in maintaining the immune homeostasis of the liver microenvironment and also functions as an immune-suppressive cytokine. Mediates biological events through unconventional receptors composed of IL12RB2 and gp130/IL6ST heterodimers or homodimers. Signaling requires the transcription factors STAT1 and STAT4, which form a unique heterodimer that binds to distinct DNA sites. The sequence is that of Interleukin-12 subunit alpha (IL12A) from Marmota monax (Woodchuck).